The sequence spans 304 residues: Glycine--tRNA ligase alpha subunit (304 aa).

Belongs to the class-II aminoacyl-tRNA synthetase family. Tetramer of two alpha and two beta subunits.

It localises to the cytoplasm. It carries out the reaction tRNA(Gly) + glycine + ATP = glycyl-tRNA(Gly) + AMP + diphosphate. This is Glycine--tRNA ligase alpha subunit from Afipia carboxidovorans (strain ATCC 49405 / DSM 1227 / KCTC 32145 / OM5) (Oligotropha carboxidovorans).